The chain runs to 392 residues: Protein Wnt-1 (392 aa).

An N-terminal signal peptide occupies residues 1-16; the sequence is MKCLWLLVITVLCLRC. Disulfide bonds link C89-C100, C142-C150, C152-C179, C227-C241, C229-C236, C321-C352, C337-C347, C351-C391, C367-C382, C369-C379, and C374-C375. N99 is a glycosylation site (N-linked (GlcNAc...) asparagine). The O-palmitoleoyl serine; by PORCN moiety is linked to residue S233. N-linked (GlcNAc...) asparagine glycans are attached at residues N338 and N368.

Belongs to the Wnt family. Post-translationally, palmitoleoylated by porcupine. The lipid group functions as a sorting signal, targeting the ligand to polarized vesicles that transport WNT-1 to unique sites at the cell surface. Depalmitoleoylated by notum, leading to inhibit Wnt signaling pathway.

It is found in the secreted. The protein resides in the extracellular space. Its subcellular location is the extracellular matrix. Functionally, ligand for members of the frizzled family of seven transmembrane receptors. Probable developmental protein. This chain is Protein Wnt-1 (WNT-1), found in Bombyx mori (Silk moth).